We begin with the raw amino-acid sequence, 572 residues long: Hemagglutinin-neuraminidase (572 aa).

Topologically, residues 1 to 31 (MEYWKHTNHGKDAGNELETSMATHGNKLTNK) are intravirion. A helical transmembrane segment spans residues 32–52 (IIYILWTIILVLLSIVFIIVL). The Virion surface portion of the chain corresponds to 53 to 572 (INSIKSEKAH…FKTEIPKSCS (520 aa)). Disulfide bonds link Cys190–Cys214 and Cys256–Cys269. Positions 252–257 (NRKSCS) are involved in neuraminidase activity. N-linked (GlcNAc...) asparagine; by host glycosylation is found at Asn308 and Asn351. Disulfide bonds link Cys355-Cys469 and Cys463-Cys473. An N-linked (GlcNAc...) asparagine; by host glycan is attached at Asn523. Residues Cys535 and Cys544 are joined by a disulfide bond.

This sequence belongs to the paramyxoviruses hemagglutinin-neuraminidase family. As to quaternary structure, homotetramer; composed of disulfide-linked homodimers. Interacts with F protein trimer.

Its subcellular location is the virion membrane. The protein localises to the host cell membrane. The enzyme catalyses Hydrolysis of alpha-(2-&gt;3)-, alpha-(2-&gt;6)-, alpha-(2-&gt;8)- glycosidic linkages of terminal sialic acid residues in oligosaccharides, glycoproteins, glycolipids, colominic acid and synthetic substrates.. In terms of biological role, attaches the virus to sialic acid-containing cell receptors and thereby initiating infection. Binding of HN protein to the receptor induces a conformational change that allows the F protein to trigger virion/cell membranes fusion. Neuraminidase activity ensures the efficient spread of the virus by dissociating the mature virions from the neuraminic acid containing glycoproteins. This is Hemagglutinin-neuraminidase (HN) from Homo sapiens (Human).